The sequence spans 211 residues: N-(5'-phosphoribosyl)anthranilate isomerase (211 aa).

It belongs to the TrpF family.

The enzyme catalyses N-(5-phospho-beta-D-ribosyl)anthranilate = 1-(2-carboxyphenylamino)-1-deoxy-D-ribulose 5-phosphate. It functions in the pathway amino-acid biosynthesis; L-tryptophan biosynthesis; L-tryptophan from chorismate: step 3/5. This chain is N-(5'-phosphoribosyl)anthranilate isomerase, found in Methanococcus maripaludis (strain C6 / ATCC BAA-1332).